The following is a 482-amino-acid chain: Tripartite motif-containing protein 10 (482 aa).

Residues 16-61 form an RING-type zinc finger; that stretch reads CPICQGTLREPVTIDCGHNFCCVCLTRYLEIPCLDPGELPTCPLCK. The B box-type zinc-finger motif lies at 95–136; the sequence is EEEDVCLEHREKVYYFCEDDEMQLCVVCREAWEHRHHTVRFL. Zn(2+) contacts are provided by C100, H103, C122, and H128. The B30.2/SPRY domain maps to 293–482; sequence REMKTFLEKL…GRGSKFSLSS (190 aa).

The protein belongs to the TRIM/RBCC family. As to quaternary structure, interacts with IFNAR1; this interaction prevents association of IFNAR1 with TYK2.

It is found in the cytoplasm. E3 ligase that plays an essential role in the differentiation and survival of terminal erythroid cells. May directly bind to PTEN and promote its ubiquitination, resulting in its proteasomal degradation and activation of hypertrophic signaling. In addition, plays a role in immune response regulation by repressing the phosphorylation of STAT1 and STAT2 in the interferon/JAK/STAT signaling pathway independent of its E3 ligase activity. Mechanistically, interacts with the intracellular domain of IFNAR1 and thereby inhibits the association of TYK2 and IFNAR1. The chain is Tripartite motif-containing protein 10 (TRIM10) from Sus scrofa (Pig).